Consider the following 615-residue polypeptide: uncharacterized protein (615 aa).

Ser-48 carries the post-translational modification Phosphoserine. Residues 424–433 are compositionally biased toward acidic residues; sequence DRENELEEGS. Residues 424 to 615 form a disordered region; the sequence is DRENELEEGS…YARKKTKKNV (192 aa). Composition is skewed to basic and acidic residues over residues 439–476, 484–496, 504–521, and 529–561; these read DNER…KEVG, DGNK…KEVA, ESEK…KEVA, and ESEK…EPSK. 2 stretches are compositionally biased toward basic residues: residues 579 to 589 and 606 to 615; these read KKPKVVKKVAK and YARKKTKKNV.

This is an uncharacterized protein from Arabidopsis thaliana (Mouse-ear cress).